We begin with the raw amino-acid sequence, 273 residues long: Ribosomal RNA small subunit methyltransferase I (273 aa).

Belongs to the methyltransferase superfamily. RsmI family.

The protein resides in the cytoplasm. The catalysed reaction is cytidine(1402) in 16S rRNA + S-adenosyl-L-methionine = 2'-O-methylcytidine(1402) in 16S rRNA + S-adenosyl-L-homocysteine + H(+). Catalyzes the 2'-O-methylation of the ribose of cytidine 1402 (C1402) in 16S rRNA. The sequence is that of Ribosomal RNA small subunit methyltransferase I from Xylella fastidiosa (strain 9a5c).